The sequence spans 299 residues: NAD kinase (299 aa).

The active-site Proton acceptor is the Asp-71. Residues 71-72 (DG), 145-146 (ND), Arg-173, Asp-175, 186-191 (TAYSLS), Ala-210, and Gln-248 each bind NAD(+).

This sequence belongs to the NAD kinase family. A divalent metal cation is required as a cofactor.

It is found in the cytoplasm. The enzyme catalyses NAD(+) + ATP = ADP + NADP(+) + H(+). Its function is as follows. Involved in the regulation of the intracellular balance of NAD and NADP, and is a key enzyme in the biosynthesis of NADP. Catalyzes specifically the phosphorylation on 2'-hydroxyl of the adenosine moiety of NAD to yield NADP. This is NAD kinase from Bordetella pertussis (strain Tohama I / ATCC BAA-589 / NCTC 13251).